The sequence spans 959 residues: E3 ubiquitin-protein ligase arkadia-B (959 aa).

Over residues 51 to 66 (CSDTNKQQSDLNSNGT) the composition is skewed to polar residues. Disordered stretches follow at residues 51-171 (CSDT…VSSL), 189-212 (RKRF…MLQR), and 225-271 (LLPS…SGGM). The segment covering 112–131 (SSFSDCISSPSSSSHFGDSD) has biased composition (low complexity). The span at 142–156 (PLSSVNSTPRTQSAR) shows a compositional bias: polar residues. The span at 228-246 (SSSSSSENDLSSESSSSSS) shows a compositional bias: low complexity. The span at 256-267 (TGENRQDGTTLP) shows a compositional bias: polar residues. Residues 275–279 (VVVIE) carry the SUMO interaction motif 1 (SIM) motif. The SUMO interaction motif 2 (SIM) motif lies at 300–306 (EVEIVTV). The disordered stretch occupies residues 318–341 (HPRSHWGQNSQSGRTQEQRTRNRV). Polar residues predominate over residues 323–332 (WGQNSQSGRT). An SUMO interaction motif 3 (SIM) motif is present at residues 355 to 359 (VVDLT). Over residues 370–397 (TTSGRVESQPVSIVSSLTSTSEPASDSM) the composition is skewed to polar residues. 4 disordered regions span residues 370–399 (TTSG…SMSG), 475–499 (HFPH…SFRD), 615–649 (PRPL…MDYV), and 661–680 (PSLT…HLSA). Residues 475-487 (HFPHHHHHHHHSS) show a composition bias toward basic residues. The segment covering 620–632 (HQTSSCPHSNSAS) has biased composition (polar residues). A compositionally biased stretch (pro residues) spans 633–646 (QPPPPPPPPPPPPM). The tract at residues 872-874 (YPH) is ubiquitin binding. Zn(2+)-binding residues include cysteine 907 and cysteine 910. An RING-type; atypical zinc finger spans residues 907–948 (CTICLSILEEGEDVRRLPCMHLFHQVCVDQWLITNKKCPICR). The interval 922–926 (RLPCM) is ubiquitin binding. Positions 930 and 933 each coordinate Zn(2+).

This sequence belongs to the Arkadia family. Monomer.

Its subcellular location is the nucleus. The protein localises to the cytoplasm. It localises to the PML body. It carries out the reaction S-ubiquitinyl-[E2 ubiquitin-conjugating enzyme]-L-cysteine + [acceptor protein]-L-lysine = [E2 ubiquitin-conjugating enzyme]-L-cysteine + N(6)-ubiquitinyl-[acceptor protein]-L-lysine.. Its pathway is protein modification; protein ubiquitination. Binds free ubiquitin non-covalently via its RING-type zinc finger. Ubiquitin-binding leads to enhance the E3 ubiquitin-protein ligase activity by stabilizing the ubiquitin-conjugating enzyme E2 (donor ubiquitin) in the 'closed' conformation and activating ubiquitin transfer. Its function is as follows. E3 ubiquitin-protein ligase required for mesoderm patterning during embryonic development. Acts as an enhancer of the transcriptional responses of the smad2/smad3 effectors, which are activated downstream of BMP. Acts by mediating ubiquitination and degradation of SMAD inhibitors such as smad7, inducing their proteasomal degradation and thereby enhancing the transcriptional activity of TGF-beta and BMP. Specifically binds polysumoylated chains via SUMO interaction motifs (SIMs) and mediates ubiquitination of sumoylated substrates. The regulation of the BMP-SMAD signaling is however independent of sumoylation and is not dependent of SUMO interaction motifs (SIMs). In Xenopus laevis (African clawed frog), this protein is E3 ubiquitin-protein ligase arkadia-B (rnf111-b).